The chain runs to 400 residues: Argininosuccinate synthase (400 aa).

ATP contacts are provided by residues 9–17 (AYSGGVDTS) and Ala-37. L-citrulline is bound at residue Tyr-88. Gly-118 contributes to the ATP binding site. 3 residues coordinate L-aspartate: Thr-120, Asn-124, and Asp-125. Residue Asn-124 participates in L-citrulline binding. L-citrulline is bound by residues Arg-128, Ser-176, Ser-185, Glu-261, and Tyr-273.

Belongs to the argininosuccinate synthase family. Type 1 subfamily. In terms of assembly, homotetramer.

It is found in the cytoplasm. The enzyme catalyses L-citrulline + L-aspartate + ATP = 2-(N(omega)-L-arginino)succinate + AMP + diphosphate + H(+). Its pathway is amino-acid biosynthesis; L-arginine biosynthesis; L-arginine from L-ornithine and carbamoyl phosphate: step 2/3. This is Argininosuccinate synthase from Prochlorococcus marinus (strain MIT 9211).